A 490-amino-acid chain; its full sequence is Probable cytosol aminopeptidase (490 aa).

Positions 255 and 260 each coordinate Mn(2+). Lys267 is a catalytic residue. Residues Asp278, Asp337, and Glu339 each coordinate Mn(2+). Arg341 is an active-site residue.

It belongs to the peptidase M17 family. Requires Mn(2+) as cofactor.

It is found in the cytoplasm. The catalysed reaction is Release of an N-terminal amino acid, Xaa-|-Yaa-, in which Xaa is preferably Leu, but may be other amino acids including Pro although not Arg or Lys, and Yaa may be Pro. Amino acid amides and methyl esters are also readily hydrolyzed, but rates on arylamides are exceedingly low.. It catalyses the reaction Release of an N-terminal amino acid, preferentially leucine, but not glutamic or aspartic acids.. In terms of biological role, presumably involved in the processing and regular turnover of intracellular proteins. Catalyzes the removal of unsubstituted N-terminal amino acids from various peptides. The protein is Probable cytosol aminopeptidase of Gluconobacter oxydans (strain 621H) (Gluconobacter suboxydans).